A 371-amino-acid polypeptide reads, in one-letter code: uncharacterized protein (371 aa).

This is an uncharacterized protein from Rickettsia prowazekii (strain Madrid E).